The sequence spans 412 residues: DnaJ homolog subfamily A member 2 (412 aa).

A J domain is found at 8 to 70 (KLYDILGVPP…EKRELYDRYG (63 aa)). At Lys39 the chain carries N6-acetyllysine. Phosphoserine occurs at positions 78 and 123. Residues 130–214 (GKTTKLQLSK…CEGKKVIKEV (85 aa)) form a CR-type zinc finger. Lys134 participates in a covalent cross-link: Glycyl lysine isopeptide (Lys-Gly) (interchain with G-Cter in SUMO2). Residues Cys143 and Cys146 each coordinate Zn(2+). The CXXCXGXG motif repeat unit spans residues 143–150 (CSACSGQG). Lys152 is modified (N6-acetyllysine). Residues Cys159, Cys162, Cys186, Cys189, Cys202, and Cys205 each coordinate Zn(2+). CXXCXGXG motif repeat units follow at residues 159–166 (CSACRGRG), 186–193 (CSDCNGEG), and 202–209 (CKKCEGKK). Residues 365 to 412 (IGETEEVELQEFDSTRGSGGGQRREAYNDSSDEESSSHHGPGVQCAHQ) are disordered. Residue Tyr391 is modified to Phosphotyrosine. Ser394 and Ser395 each carry phosphoserine. A Cysteine methyl ester modification is found at Cys409. Cys409 is lipidated: S-farnesyl cysteine. A propeptide spans 410–412 (AHQ) (removed in mature form).

It is found in the membrane. In terms of biological role, co-chaperone of Hsc70. Stimulates ATP hydrolysis and the folding of unfolded proteins mediated by HSPA1A/B (in vitro). The protein is DnaJ homolog subfamily A member 2 (Dnaja2) of Mus musculus (Mouse).